The following is a 448-amino-acid chain: Protein EVI2B (448 aa).

An N-terminal signal peptide occupies residues 1 to 21 (MDPKYFILILFCGHLNNTFFS). N16 and N50 each carry an N-linked (GlcNAc...) asparagine glycan. Topologically, residues 22–202 (KTETITTEKQ…QTPQKNNYNS (181 aa)) are extracellular. The tract at residues 74-108 (AKVTAGQPTPAVYTSSEKPEAHTSAGQPLAYNTKQ) is disordered. Polar residues predominate over residues 97–108 (SAGQPLAYNTKQ). N-linked (GlcNAc...) asparagine glycosylation is present at N114. The helical transmembrane segment at 203 to 226 (IAAILIGVLLTSMLVAIIIIVLWK) threads the bilayer. Residues 227–448 (CLRKPVLNDQ…SLPPPPAELL (222 aa)) lie on the Cytoplasmic side of the membrane. The residue at position 249 (T249) is a Phosphothreonine. Phosphoserine occurs at positions 268, 271, 278, and 294. Disordered stretches follow at residues 298–372 (IEDS…DSTS) and 427–448 (SIPP…AELL). 2 stretches are compositionally biased toward polar residues: residues 313–333 (VNGT…VSSS) and 350–372 (QESN…DSTS).

Bone marrow, peripheral blood mononuclear cells, fibroblasts and Epstein-Barr virus-transformed lymphoblastoid cell lines. Strongly expressed in granulocytic cells, and weakly on lymphocytes cells.

The protein resides in the membrane. Functionally, required for granulocyte differentiation and functionality of hematopoietic progenitor cells through the control of cell cycle progression and survival of hematopoietic progenitor cells. The protein is Protein EVI2B of Homo sapiens (Human).